A 236-amino-acid chain; its full sequence is Peptidyl-prolyl cis-trans isomerase CYP21-4 (236 aa).

Residues Ile-22 to Val-42 form a helical; Signal-anchor for type II membrane protein membrane-spanning segment. The tract at residues Ser-52 to Ala-71 is disordered. Positions Asn-54–Asp-67 are enriched in basic and acidic residues. In terms of domain architecture, PPIase cyclophilin-type spans Phe-82 to Leu-232. N-linked (GlcNAc...) asparagine glycosylation occurs at Asn-86.

This sequence belongs to the cyclophilin-type PPIase family. Ubiquitous.

It is found in the membrane. It catalyses the reaction [protein]-peptidylproline (omega=180) = [protein]-peptidylproline (omega=0). Its function is as follows. PPIases accelerate the folding of proteins. It catalyzes the cis-trans isomerization of proline imidic peptide bonds in oligopeptides. This chain is Peptidyl-prolyl cis-trans isomerase CYP21-4 (CYP21-4), found in Arabidopsis thaliana (Mouse-ear cress).